The chain runs to 586 residues: NudC domain-containing protein 1 (586 aa).

The interval 259 to 278 (KDQPESSEDEKMDEDNKREP) is disordered. The 90-residue stretch at 275-364 (KREPLYNWHQ…EPGSTWAELV (90 aa)) folds into the CS domain.

It is found in the cytoplasm. The protein resides in the nucleus. This chain is NudC domain-containing protein 1, found in Xenopus tropicalis (Western clawed frog).